Consider the following 376-residue polypeptide: Chaperone protein DnaJ (376 aa).

The J domain maps to 5-70; that stretch reads DYYEVLGVGR…DKKAAYDQFG (66 aa). The CR-type zinc-finger motif lies at 132–210; it reads GLTKELRIPT…CHGEGRVEKS (79 aa). Residues Cys145, Cys148, Cys162, Cys165, Cys184, Cys187, Cys198, and Cys201 each coordinate Zn(2+). CXXCXGXG motif repeat units follow at residues 145–152, 162–169, 184–191, and 198–205; these read CDSCDGSG, CGTCHGQG, CPTCHGRG, and CNKCHGEG.

It belongs to the DnaJ family. In terms of assembly, homodimer. The cofactor is Zn(2+).

Its subcellular location is the cytoplasm. Participates actively in the response to hyperosmotic and heat shock by preventing the aggregation of stress-denatured proteins and by disaggregating proteins, also in an autonomous, DnaK-independent fashion. Unfolded proteins bind initially to DnaJ; upon interaction with the DnaJ-bound protein, DnaK hydrolyzes its bound ATP, resulting in the formation of a stable complex. GrpE releases ADP from DnaK; ATP binding to DnaK triggers the release of the substrate protein, thus completing the reaction cycle. Several rounds of ATP-dependent interactions between DnaJ, DnaK and GrpE are required for fully efficient folding. Also involved, together with DnaK and GrpE, in the DNA replication of plasmids through activation of initiation proteins. This is Chaperone protein DnaJ from Shewanella pealeana (strain ATCC 700345 / ANG-SQ1).